Consider the following 1295-residue polypeptide: DNA-directed RNA polymerase subunit beta' (1295 aa).

Zn(2+) is bound by residues Cys-60, Cys-62, Cys-75, and Cys-78. Positions 516, 518, and 520 each coordinate Mg(2+). Positions 841, 914, 921, and 924 each coordinate Zn(2+).

This sequence belongs to the RNA polymerase beta' chain family. The RNAP catalytic core consists of 2 alpha, 1 beta, 1 beta' and 1 omega subunit. When a sigma factor is associated with the core the holoenzyme is formed, which can initiate transcription. Requires Mg(2+) as cofactor. It depends on Zn(2+) as a cofactor.

It carries out the reaction RNA(n) + a ribonucleoside 5'-triphosphate = RNA(n+1) + diphosphate. DNA-dependent RNA polymerase catalyzes the transcription of DNA into RNA using the four ribonucleoside triphosphates as substrates. The polypeptide is DNA-directed RNA polymerase subunit beta' (Dehalococcoides mccartyi (strain CBDB1)).